The chain runs to 1010 residues: Importin-8 (1010 aa).

One can recognise an Importin N-terminal domain in the interval 22–102 (AETELNQSYK…RDNIVEGIIR (81 aa)). Basic and acidic residues predominate over residues 886 to 895 (NHSKAEKVDI). Residues 886 to 932 (NHSKAEKVDIEENEEISSEEEEETSVSAQAMQSQIGRSEEEDDDDWD) are disordered. Residues 896–909 (EENEEISSEEEEET) show a composition bias toward acidic residues. A phosphoserine mark is found at serine 902 and serine 903. Residues 910 to 921 (SVSAQAMQSQIG) show a composition bias toward polar residues.

It belongs to the importin beta family. Forms a heterodimer with KPNB1. Interacts with SRP19. Interacts with RPL23A. Binds directly to nuclear pore complexes. Interacts with LRPPRC; the interaction occurs when LRPPRC is in its RNA-free form and promotes import of LRPPRC to the nucleus to allow for EIF4E-mediated export of mRNAS from the nucleus to the cytoplasm.

The protein resides in the cytoplasm. The protein localises to the nucleus. In terms of biological role, involved in nuclear protein import, either by acting as autonomous nuclear transport receptor or as an adapter-like protein in association with the importin-beta subunit KPNB1. Acting autonomously, may serve as receptor for nuclear localization signals (NLS) and promote translocation of import substrates through the nuclear pore complex (NPC) by an energy requiring, Ran-dependent mechanism. At the nucleoplasmic side of the NPC, Ran binds to importin, the importin/substrate complex dissociates and importin is re-exported from the nucleus to the cytoplasm where GTP hydrolysis releases Ran. The directionality of nuclear import is thought to be conferred by an asymmetric distribution of the GTP- and GDP-bound forms of Ran between the cytoplasm and nucleus. In vitro mediates the nuclear import of the signal recognition particle protein SRP19. May also be involved in cytoplasm-to-nucleus shuttling of a broad spectrum of other cargos, including Argonaute-microRNAs complexes, the JUN protein, RELA/NF-kappa-B p65 subunit, the translation initiation factor EIF4E and a set of receptor-activated mothers against decapentaplegic homolog (SMAD) transcription factors that play a critical role downstream of the large family of transforming growth factor beta and bone morphogenetic protein (BMP) cytokines. This Mus musculus (Mouse) protein is Importin-8.